The primary structure comprises 141 residues: Large ribosomal subunit protein uL16 (141 aa).

Positions 1–16 are enriched in basic residues; that stretch reads MLMPRKPPKGFRKPHH. Residues 1-27 form a disordered region; the sequence is MLMPRKPPKGFRKPHHPDRSGASKGGN.

The protein belongs to the universal ribosomal protein uL16 family. Part of the 50S ribosomal subunit.

Its function is as follows. Binds 23S rRNA and is also seen to make contacts with the A and possibly P site tRNAs. This Salinispora arenicola (strain CNS-205) protein is Large ribosomal subunit protein uL16.